The chain runs to 500 residues: Glutamate decarboxylase 3 (500 aa).

At Ser8 the chain carries Phosphoserine. Lys277 is subject to N6-(pyridoxal phosphate)lysine.

Belongs to the group II decarboxylase family. As to quaternary structure, homohexamer. Interacts with calmodulin. Pyridoxal 5'-phosphate serves as cofactor. As to expression, expressed at low levels in siliques.

The catalysed reaction is L-glutamate + H(+) = 4-aminobutanoate + CO2. Functionally, catalyzes the production of GABA. The calmodulin-binding is calcium-dependent and it is proposed that this may, directly or indirectly, form a calcium regulated control of GABA biosynthesis. The sequence is that of Glutamate decarboxylase 3 (GAD3) from Arabidopsis thaliana (Mouse-ear cress).